The primary structure comprises 468 residues: Siroheme synthase 1 (468 aa).

Residues 1–204 (MDYLPIFCRL…GDKASANQLA (204 aa)) are precorrin-2 dehydrogenase /sirohydrochlorin ferrochelatase. Residues 22–23 (EV) and 43–44 (PA) contribute to the NAD(+) site. A Phosphoserine modification is found at S128. The segment at 216-468 (GEVILVGAGP…NHGVQAAALA (253 aa)) is uroporphyrinogen-III C-methyltransferase. Residue P225 participates in S-adenosyl-L-methionine binding. D248 (proton acceptor) is an active-site residue. K270 acts as the Proton donor in catalysis. S-adenosyl-L-methionine contacts are provided by residues 301-303 (GGD), I306, 331-332 (TA), M383, and G412.

In the N-terminal section; belongs to the precorrin-2 dehydrogenase / sirohydrochlorin ferrochelatase family. It in the C-terminal section; belongs to the precorrin methyltransferase family.

The enzyme catalyses uroporphyrinogen III + 2 S-adenosyl-L-methionine = precorrin-2 + 2 S-adenosyl-L-homocysteine + H(+). It carries out the reaction precorrin-2 + NAD(+) = sirohydrochlorin + NADH + 2 H(+). The catalysed reaction is siroheme + 2 H(+) = sirohydrochlorin + Fe(2+). It functions in the pathway cofactor biosynthesis; adenosylcobalamin biosynthesis; precorrin-2 from uroporphyrinogen III: step 1/1. The protein operates within cofactor biosynthesis; adenosylcobalamin biosynthesis; sirohydrochlorin from precorrin-2: step 1/1. Its pathway is porphyrin-containing compound metabolism; siroheme biosynthesis; precorrin-2 from uroporphyrinogen III: step 1/1. It participates in porphyrin-containing compound metabolism; siroheme biosynthesis; siroheme from sirohydrochlorin: step 1/1. It functions in the pathway porphyrin-containing compound metabolism; siroheme biosynthesis; sirohydrochlorin from precorrin-2: step 1/1. In terms of biological role, multifunctional enzyme that catalyzes the SAM-dependent methylations of uroporphyrinogen III at position C-2 and C-7 to form precorrin-2 via precorrin-1. Then it catalyzes the NAD-dependent ring dehydrogenation of precorrin-2 to yield sirohydrochlorin. Finally, it catalyzes the ferrochelation of sirohydrochlorin to yield siroheme. The polypeptide is Siroheme synthase 1 (Aeromonas salmonicida (strain A449)).